A 266-amino-acid chain; its full sequence is Chymotrypsin-like elastase family member 1 (266 aa).

An N-terminal signal peptide occupies residues 1 to 16; it reads MLRFLVFATLVLYGHS. Positions 17–26 are cleaved as a propeptide — activation peptide; sequence TQDFPETNAR. In terms of domain architecture, Peptidase S1 spans 27-264; it reads VVGGTEAGRN…YISWINKTIA (238 aa). C56 and C72 are oxidised to a cystine. H71 serves as the catalytic Charge relay system. Ca(2+) contacts are provided by D85, N87, Q90, and E95. N87 carries N-linked (GlcNAc...) asparagine glycosylation. D119 serves as the catalytic Charge relay system. Cystine bridges form between C153–C220, C184–C200, and C210–C240. S214 serves as the catalytic Charge relay system. N-linked (GlcNAc...) asparagine glycosylation is found at N241 and N260.

Belongs to the peptidase S1 family. Elastase subfamily. Requires Ca(2+) as cofactor.

It is found in the secreted. The enzyme catalyses Hydrolysis of proteins, including elastin. Preferential cleavage: Ala-|-Xaa.. Its function is as follows. Serine proteases that hydrolyze many proteins in addition to elastin. This chain is Chymotrypsin-like elastase family member 1 (CELA1), found in Macaca fascicularis (Crab-eating macaque).